Consider the following 195-residue polypeptide: Xanthine phosphoribosyltransferase (195 aa).

Xanthine is bound by residues Leu20 and Asn27. 128–132 (ANGQA) is a 5-phospho-alpha-D-ribose 1-diphosphate binding site. Lys156 contacts xanthine.

This sequence belongs to the purine/pyrimidine phosphoribosyltransferase family. Xpt subfamily. As to quaternary structure, homodimer.

It localises to the cytoplasm. It carries out the reaction XMP + diphosphate = xanthine + 5-phospho-alpha-D-ribose 1-diphosphate. Its pathway is purine metabolism; XMP biosynthesis via salvage pathway; XMP from xanthine: step 1/1. Converts the preformed base xanthine, a product of nucleic acid breakdown, to xanthosine 5'-monophosphate (XMP), so it can be reused for RNA or DNA synthesis. In Lactiplantibacillus plantarum (strain ATCC BAA-793 / NCIMB 8826 / WCFS1) (Lactobacillus plantarum), this protein is Xanthine phosphoribosyltransferase.